A 430-amino-acid chain; its full sequence is Probable dual-specificity RNA methyltransferase RlmN (430 aa).

Residue Glu-125 is the Proton acceptor of the active site. The Radical SAM core domain maps to 152–395 (RHGRVTLCVS…VTVRDTRGRE (244 aa)). Residues Cys-159 and Cys-400 are joined by a disulfide bond. [4Fe-4S] cluster-binding residues include Cys-166, Cys-170, and Cys-173. S-adenosyl-L-methionine is bound by residues 221–222 (GE), Ser-255, 278–280 (SLH), and Asn-357. Catalysis depends on Cys-400, which acts as the S-methylcysteine intermediate.

It belongs to the radical SAM superfamily. RlmN family. The cofactor is [4Fe-4S] cluster.

It localises to the cytoplasm. The catalysed reaction is adenosine(2503) in 23S rRNA + 2 reduced [2Fe-2S]-[ferredoxin] + 2 S-adenosyl-L-methionine = 2-methyladenosine(2503) in 23S rRNA + 5'-deoxyadenosine + L-methionine + 2 oxidized [2Fe-2S]-[ferredoxin] + S-adenosyl-L-homocysteine. The enzyme catalyses adenosine(37) in tRNA + 2 reduced [2Fe-2S]-[ferredoxin] + 2 S-adenosyl-L-methionine = 2-methyladenosine(37) in tRNA + 5'-deoxyadenosine + L-methionine + 2 oxidized [2Fe-2S]-[ferredoxin] + S-adenosyl-L-homocysteine. Functionally, specifically methylates position 2 of adenine 2503 in 23S rRNA and position 2 of adenine 37 in tRNAs. The chain is Probable dual-specificity RNA methyltransferase RlmN from Acidothermus cellulolyticus (strain ATCC 43068 / DSM 8971 / 11B).